The chain runs to 354 residues: 3-dehydroquinate synthase (354 aa).

NAD(+) contacts are provided by residues 100-104, 124-125, Lys136, Lys145, and 163-166; these read GATGD, TT, and FLKT. Glu178, His242, and His256 together coordinate Zn(2+).

It belongs to the sugar phosphate cyclases superfamily. Dehydroquinate synthase family. The cofactor is NAD(+). Co(2+) serves as cofactor. Zn(2+) is required as a cofactor.

It is found in the cytoplasm. It catalyses the reaction 7-phospho-2-dehydro-3-deoxy-D-arabino-heptonate = 3-dehydroquinate + phosphate. The protein operates within metabolic intermediate biosynthesis; chorismate biosynthesis; chorismate from D-erythrose 4-phosphate and phosphoenolpyruvate: step 2/7. In terms of biological role, catalyzes the conversion of 3-deoxy-D-arabino-heptulosonate 7-phosphate (DAHP) to dehydroquinate (DHQ). The polypeptide is 3-dehydroquinate synthase (Staphylococcus aureus (strain MSSA476)).